A 250-amino-acid polypeptide reads, in one-letter code: Alpha/beta hydrolase nvfD (250 aa).

Residues D198 and H226 each act as charge relay system in the active site.

This sequence belongs to the AB hydrolase superfamily.

It functions in the pathway secondary metabolite biosynthesis; terpenoid biosynthesis. In terms of biological role, alpha/beta hydrolase; part of the gene cluster that mediates the biosynthesis of novofumigatonin, a heavily oxygenated meroterpenoid containing a unique orthoester moiety. The first step of the pathway is the synthesis of 3,5-dimethylorsellinic acid (DMOA) by the polyketide synthase nvfA via condensation of one acetyl-CoA starter unit with 3 malonyl-CoA units and 2 methylations. DMOA is then converted to farnesyl-DMOA by the farnesyltransferase nvfB. Epoxydation by FAD-dependent monooxygenase nvfK, followed by a protonation-initiated cyclization catalyzed by the terpene cyclase nvfL leads to the production of asnavolin H. The short chain dehydrogenase nvfC then as a 3-OH dehydrogenase of asnovolin H to yield chemesin D. There are two branches to synthesize asnovolin A from chemesin D. In one branch, chemesin D undergoes Baeyer-Villiger oxidation by nvfH, methylation by nvfJ, and enoyl reduction by the nvfM D enoylreductase that reduces the double bond between C-5'and C-6', to form respectively asnovolin I, asnovolin K, and asnovolin A. In the other branch, the methylation precedes the Baeyer-Villiger oxidation and the enoyl reduction to yield asnovolin A via the asnovolin J intermediate. Asnovolin A is further converted to fumigatonoid A by the Fe(II)/2-oxoglutarate-dependent dioxygenase nvfI that catalyzes an endoperoxidation reaction. The alpha/beta hydrolase nvfD then acts as an epimerase that converts fumigatonoid A to its C-5' epimer, which then undergoes spontaneous or nvfD-catalyzed lactonization. The following step utilizes the ketoreductase nvfG to produce fumigatonoid B. The dioxygenase nvfE further converts fumigatonoid B into fumigatonoid C. Finally the Fe(II)/2-oxoglutarate-dependent dioxygenase nvfF catalyzes two rounds of oxidation to transform fumigatonoid C into the end product, novofumigatonin A. In Aspergillus novofumigatus (strain IBT 16806), this protein is Alpha/beta hydrolase nvfD.